The chain runs to 436 residues: Serine--tRNA ligase (436 aa).

239 to 241 (TAE) lines the L-serine pocket. 270 to 272 (RLE) contributes to the ATP binding site. L-serine is bound at residue glutamate 293. 357-360 (EISS) provides a ligand contact to ATP. Serine 393 is a binding site for L-serine.

This sequence belongs to the class-II aminoacyl-tRNA synthetase family. Type-1 seryl-tRNA synthetase subfamily. As to quaternary structure, homodimer. The tRNA molecule binds across the dimer.

The protein resides in the cytoplasm. The catalysed reaction is tRNA(Ser) + L-serine + ATP = L-seryl-tRNA(Ser) + AMP + diphosphate + H(+). It catalyses the reaction tRNA(Sec) + L-serine + ATP = L-seryl-tRNA(Sec) + AMP + diphosphate + H(+). The protein operates within aminoacyl-tRNA biosynthesis; selenocysteinyl-tRNA(Sec) biosynthesis; L-seryl-tRNA(Sec) from L-serine and tRNA(Sec): step 1/1. In terms of biological role, catalyzes the attachment of serine to tRNA(Ser). Is also able to aminoacylate tRNA(Sec) with serine, to form the misacylated tRNA L-seryl-tRNA(Sec), which will be further converted into selenocysteinyl-tRNA(Sec). This Blochmanniella floridana protein is Serine--tRNA ligase.